The chain runs to 379 residues: Oxidized polyvinyl alcohol hydrolase (379 aa).

An N-terminal signal peptide occupies residues 1–23 (MNQSLGVLRLTRGVIALALASVA). Residues Ser203 and Ser309 each act as charge relay system in the active site.

This sequence belongs to the peptidase S9A family. In terms of assembly, monomer.

The catalysed reaction is nonane-4,6-dione + H2O = pentan-2-one + butanoate + H(+). Its function is as follows. Catalyzes the hydrolysis of 4,6-nonanedione, a beta-diketone compound. Also mediates hydrolysis of oxidized polyvinyl alcohol (PVA) in the second step in the degradation of polyvinyl alcohol. Not active toward the monoketone structure. The polypeptide is Oxidized polyvinyl alcohol hydrolase (pvaB) (Pseudomonas sp).